A 289-amino-acid polypeptide reads, in one-letter code: Oxaloacetate decarboxylase (289 aa).

Ser-47 is a binding site for substrate. Asp-85 contributes to the Mg(2+) binding site. 2 residues coordinate substrate: Arg-156 and His-232.

It belongs to the isocitrate lyase/PEP mutase superfamily. Oxaloacetate decarboxylase family. As to quaternary structure, homotetramer; dimer of dimers. Requires Mg(2+) as cofactor.

It catalyses the reaction oxaloacetate + H(+) = pyruvate + CO2. In terms of biological role, catalyzes the decarboxylation of oxaloacetate into pyruvate. Seems to play a role in maintaining cellular concentrations of bicarbonate and pyruvate. The sequence is that of Oxaloacetate decarboxylase from Rhodopseudomonas palustris (strain BisA53).